The sequence spans 138 residues: Large ribosomal subunit protein uL16 (138 aa).

Belongs to the universal ribosomal protein uL16 family. In terms of assembly, part of the 50S ribosomal subunit.

In terms of biological role, binds 23S rRNA and is also seen to make contacts with the A and possibly P site tRNAs. The sequence is that of Large ribosomal subunit protein uL16 from Chlamydia caviae (strain ATCC VR-813 / DSM 19441 / 03DC25 / GPIC) (Chlamydophila caviae).